A 529-amino-acid chain; its full sequence is Probable serine/threonine protein phosphatase 2A regulatory subunit B''epsilon (529 aa).

The interval 60 to 110 (KSGTPTNKSKNLPSVFLSSSTPPLSPRSSSGSPRFSRQRTSPPSLHSPLRS) is disordered. Over residues 71–109 (LPSVFLSSSTPPLSPRSSSGSPRFSRQRTSPPSLHSPLR) the composition is skewed to low complexity. The EF-hand domain maps to 381–416 (SSEPSLEYWFKCVDLDGNGVITSNEMQFFFEEQLHR). 4 residues coordinate Ca(2+): Asp394, Asp396, Asn398, and Glu405. The interval 507–529 (EEDVDEVSNGSADVWDEPLEPPF) is disordered. A compositionally biased stretch (acidic residues) spans 520–529 (VWDEPLEPPF).

In terms of assembly, PP2A consists of a common heterodimeric core enzyme, composed of a 36 kDa catalytic subunit (subunit C) and a 65 kDa constant regulatory subunit (PR65 or subunit A), that associates with a variety of regulatory subunits. Proteins that associate with the core dimer include three families of regulatory subunits B (the R2/B/PR55/B55, R3/B''/PR72/PR130/PR59 and R5/B'/B56 families) and cell signaling molecules.

Functionally, probable regulatory subunit of type 2A protein phosphatase. The polypeptide is Probable serine/threonine protein phosphatase 2A regulatory subunit B''epsilon (B''EPSILON) (Arabidopsis thaliana (Mouse-ear cress)).